Here is a 126-residue protein sequence, read N- to C-terminus: MAEKLEVYKCELCGNIVEVLHGGAGELVCCGKPMNLLNENTVDAAKEKHVPVIEKTNDGIIVKVGSVAHPMEEKHFIQWIELIANGKAYRQHLSPGDKPEACFPLITGPLKVREYCNLHGLWSSEG.

Residues Cys10, Cys13, Cys29, Cys30, His49, His69, His75, Cys116, and His119 each coordinate Fe cation.

The protein belongs to the desulfoferrodoxin family. In terms of assembly, homodimer. The cofactor is Fe(3+). It depends on Cu(2+) as a cofactor.

It carries out the reaction reduced [rubredoxin] + superoxide + 2 H(+) = oxidized [rubredoxin] + H2O2. In terms of biological role, catalyzes the one-electron reduction of superoxide anion radical to hydrogen peroxide at a nonheme ferrous iron center. Plays a fundamental role in case of oxidative stress via its superoxide detoxification activity. The protein is Desulfoferrodoxin (dfx) of Syntrophotalea carbinolica (strain DSM 2380 / NBRC 103641 / GraBd1) (Pelobacter carbinolicus).